The primary structure comprises 83 residues: NAD(P)H-quinone oxidoreductase subunit L, organellar chromatophore (83 aa).

2 helical membrane passes run 17 to 37 and 53 to 73; these read LLLAYGVLGGLYLILVPLALY and LFVYGLVFLFFPGLILLSPFL.

This sequence belongs to the complex I NdhL subunit family. NDH-1 can be composed of about 15 different subunits; different subcomplexes with different compositions have been identified which probably have different functions.

Its subcellular location is the plastid. It is found in the organellar chromatophore thylakoid membrane. The enzyme catalyses a plastoquinone + NADH + (n+1) H(+)(in) = a plastoquinol + NAD(+) + n H(+)(out). It catalyses the reaction a plastoquinone + NADPH + (n+1) H(+)(in) = a plastoquinol + NADP(+) + n H(+)(out). Functionally, NDH-1 shuttles electrons from an unknown electron donor, via FMN and iron-sulfur (Fe-S) centers, to quinones in the respiratory and/or the photosynthetic chain. The immediate electron acceptor for the enzyme in this species is believed to be plastoquinone. Couples the redox reaction to proton translocation, and thus conserves the redox energy in a proton gradient. The polypeptide is NAD(P)H-quinone oxidoreductase subunit L, organellar chromatophore (Paulinella chromatophora).